The sequence spans 107 residues: Iron-binding protein IscA (107 aa).

Residues Cys35, Cys99, and Cys101 each coordinate Fe cation.

Belongs to the HesB/IscA family. Homodimer; may form tetramers and higher multimers. Requires Fe cation as cofactor.

Is able to transfer iron-sulfur clusters to apo-ferredoxin. Multiple cycles of [2Fe2S] cluster formation and transfer are observed, suggesting that IscA acts catalytically. Recruits intracellular free iron so as to provide iron for the assembly of transient iron-sulfur cluster in IscU in the presence of IscS, L-cysteine and the thioredoxin reductase system TrxA/TrxB. The polypeptide is Iron-binding protein IscA (Yersinia pestis bv. Antiqua (strain Angola)).